We begin with the raw amino-acid sequence, 451 residues long: Phosphoglucosamine mutase (451 aa).

Residue serine 101 is the Phosphoserine intermediate of the active site. Residues serine 101, aspartate 240, aspartate 242, and aspartate 244 each coordinate Mg(2+). Serine 101 carries the post-translational modification Phosphoserine.

Belongs to the phosphohexose mutase family. Requires Mg(2+) as cofactor. Post-translationally, activated by phosphorylation.

It catalyses the reaction alpha-D-glucosamine 1-phosphate = D-glucosamine 6-phosphate. Functionally, catalyzes the conversion of glucosamine-6-phosphate to glucosamine-1-phosphate. In Streptococcus pyogenes serotype M3 (strain SSI-1), this protein is Phosphoglucosamine mutase.